The following is a 307-amino-acid chain: Homoserine kinase (307 aa).

92–102 (PLARGLGSSAT) contacts ATP.

This sequence belongs to the GHMP kinase family. Homoserine kinase subfamily.

It localises to the cytoplasm. It catalyses the reaction L-homoserine + ATP = O-phospho-L-homoserine + ADP + H(+). The protein operates within amino-acid biosynthesis; L-threonine biosynthesis; L-threonine from L-aspartate: step 4/5. Functionally, catalyzes the ATP-dependent phosphorylation of L-homoserine to L-homoserine phosphate. This Microchaete diplosiphon (Fremyella diplosiphon) protein is Homoserine kinase (thrB).